Reading from the N-terminus, the 509-residue chain is Thymus-specific serine protease (509 aa).

An N-terminal signal peptide occupies residues 1 to 22 (MAVKAPWLGFLLLVSLWGLSTP). N-linked (GlcNAc...) asparagine glycans are attached at residues N69 and N171. Residue S184 is the Charge relay system of the active site. An N-linked (GlcNAc...) asparagine glycan is attached at N320. Residues D446 and H471 each act as charge relay system in the active site.

Belongs to the peptidase S28 family. As to expression, expressed predominantly in cortical thymic epithelial cells, with highest expression around vessels and the thymic capsule.

Its subcellular location is the cytoplasmic vesicle. Protease that may play a role in T-cell development. The protein is Thymus-specific serine protease (Prss16) of Mus musculus (Mouse).